The following is a 696-amino-acid chain: Glycine--tRNA ligase beta subunit (696 aa).

Belongs to the class-II aminoacyl-tRNA synthetase family. In terms of assembly, tetramer of two alpha and two beta subunits.

The protein resides in the cytoplasm. The enzyme catalyses tRNA(Gly) + glycine + ATP = glycyl-tRNA(Gly) + AMP + diphosphate. The chain is Glycine--tRNA ligase beta subunit from Nitratidesulfovibrio vulgaris (strain DP4) (Desulfovibrio vulgaris).